Consider the following 383-residue polypeptide: Caspase a (383 aa).

Residues Met-1–Val-142 constitute a propeptide that is removed on maturation. Residues His-8–Glu-81 enclose the Pyrin domain. The interval Thr-87 to Asp-106 is disordered. Catalysis depends on residues His-220 and Cys-270. Residues His-275–Phe-296 constitute a propeptide that is removed on maturation.

Belongs to the peptidase C14A family. In terms of assembly, heterotetramer that consists of two anti-parallel arranged heterodimers, each one formed by a 20 kDa (p20) and a 10 kDa (p10) subunit. Interacts (via pyrin domain) with pycard (via pyrin domain). Interacts with caspb. Component of NLRP1 inflammasomes. Inflammasomes are supramolecular complexes that assemble in the cytosol in response to pathogens and other damage-associated signals and play critical roles in innate immunity and inflammation. The NLRP1 inflammasome is composed of the signal sensor nlrp1, and the adapter pycard (asc), which recruit effector pro-inflammatory caspases caspa and/or caspb. The interaction between nlrp1 and pycard is required for the sequential recruitment of caspa and then caspb. Caspa is preferentially recruited first and this causes the cleavage of pro-il1b into the midformed il1b. This is followed by the recruitment of caspb, which is activated and cleaves the midformed il1b resulting in il1b maturation. Interacts with caiap. In terms of processing, the two subunits are derived from the precursor sequence by an autocatalytic mechanism.

The protein localises to the inflammasome. It localises to the cytoplasm. It carries out the reaction Strict requirement for an Asp residue at position P1 and has a preferred cleavage sequence of Tyr-Val-Ala-Asp-|-.. In terms of biological role, thiol protease which cleaves IL-1 beta (il1b), releasing the mature cytokine which is involved in a variety of inflammatory processes, and mediates apoptosis. Component of the NLRP1 inflammasome, which plays a crucial role in innate immunity and inflammation. In response to pathogens and other damage-associated signals, recruited to the NLRP1 inflammasome in its precursor form. Its subsequent activation causes the cleavage of pro-il1b into the midformed il1b, which then evetually leads to il1b maturation and secretion in the extracellular milieu. Required for the development of the cartilaginous pharyngeal skeleton. This Danio rerio (Zebrafish) protein is Caspase a.